The primary structure comprises 553 residues: uncharacterized protein (553 aa).

The SWIB/MDM2 domain occupies 26 to 109 (RFEFVGWGSR…YDLLEKHYKE (84 aa)). Residues 150 to 275 (AIVSDNIKLL…KAKKLHKDQT (126 aa)) form the Plus3 domain. Disordered stretches follow at residues 335–357 (QNPEVSSPEAHKSDNEQRLSESP) and 447–482 (PVNNVDNGSQVQPNPSEVIELSDDDEDDNGDGETLD). Positions 343–353 (EAHKSDNEQRL) are enriched in basic and acidic residues. Residues 447-461 (PVNNVDNGSQVQPNP) show a composition bias toward polar residues. A compositionally biased stretch (acidic residues) spans 466–480 (ELSDDDEDDNGDGET). Residues 497–551 (KLNWLYKDPQGLVQGPFSLTQLKAWSDAEYFTKQFRVWMTGESMESAVLLTDVLR) form the GYF domain.

This is an uncharacterized protein from Arabidopsis thaliana (Mouse-ear cress).